A 485-amino-acid polypeptide reads, in one-letter code: Forkhead box protein N3 (485 aa).

Disordered regions lie at residues 1-54 and 85-108; these read MGPV…KGGM and PVQDIDDDTPPSPAQSDMPYDAKQ. A compositionally biased stretch (polar residues) spans 16–30; that stretch reads ISVSSQCYRSSTLSN. Residues 113 to 209 constitute a DNA-binding region (fork-head); sequence KPPYSFSCLI…QALKKTPYHP (97 aa). Disordered stretches follow at residues 316 to 357 and 401 to 449; these read MESE…ISSS and PLVE…MKEA. Residues 338–357 are compositionally biased toward low complexity; the sequence is SSAKSANKRSSSPSDSISSS. The segment covering 410 to 422 has biased composition (basic residues); sequence QHKKKQHLLKLRR.

In terms of tissue distribution, at early cleavage stages, localized within the animal half of the embryo. At gastrulation, expression expands over the whole embryo excluding the future endodermal cells of the blastopore. During neurulation, expressed in the prospective eye field and in the neural crest cells. Strongly enriched in the eye vesicles at stage 26. From stage 29 onwards, expressed predominantly in the eye, the branchial arches and the vagal ganglion. At stage 38, expressed throughout the head with strongest expression in the head mesenchyme and the eye lens.

It is found in the nucleus. In terms of biological role, acts as a transcriptional repressor. May be involved in DNA damage-inducible cell cycle arrests (checkpoints). The sequence is that of Forkhead box protein N3 from Xenopus laevis (African clawed frog).